A 306-amino-acid polypeptide reads, in one-letter code: Protein LOT5 (306 aa).

Belongs to the LOT5 family.

The protein localises to the cytoplasm. It is found in the nucleus. This chain is Protein LOT5 (LOT5), found in Saccharomyces cerevisiae (strain ATCC 204508 / S288c) (Baker's yeast).